Reading from the N-terminus, the 108-residue chain is Peptidyl-prolyl cis-trans isomerase FKBP1A (108 aa).

Position 10 is a phosphoserine (serine 10). The PPIase FKBP-type domain maps to 20–108 (GQTCVVHYTG…VFDVELLKLE (89 aa)). N6-acetyllysine; alternate is present on lysine 53. An N6-succinyllysine; alternate modification is found at lysine 53.

Belongs to the FKBP-type PPIase family. FKBP1 subfamily. In terms of assembly, interacts with TGFBR1; prevents TGFBR1 phosphorylation by TGFBR2 and stabilizes it in the inactive conformation. Interacts with ACVR1B and SMAD7. Identified in a complex composed of RYR1, PDE4D, PKA, FKBP1A and protein phosphatase 1 (PP1). Interacts directly with RYR2. Interacts directly with RYR3. Interacts directly with RYR1. Interacts with GLMN; rapamycin and FK506 abolish the interaction with GLMN in a dose dependent manner. In terms of tissue distribution, ubiquitous.

It localises to the cytoplasm. Its subcellular location is the cytosol. The protein localises to the sarcoplasmic reticulum membrane. It carries out the reaction [protein]-peptidylproline (omega=180) = [protein]-peptidylproline (omega=0). Inhibited by both FK506 and rapamycin. Functionally, keeps in an inactive conformation TGFBR1, the TGF-beta type I serine/threonine kinase receptor, preventing TGF-beta receptor activation in absence of ligand. Recruits SMAD7 to ACVR1B which prevents the association of SMAD2 and SMAD3 with the activin receptor complex, thereby blocking the activin signal. May modulate the RYR1 calcium channel activity. PPIases accelerate the folding of proteins. It catalyzes the cis-trans isomerization of proline imidic peptide bonds in oligopeptides. This Rattus norvegicus (Rat) protein is Peptidyl-prolyl cis-trans isomerase FKBP1A (Fkbp1a).